The following is a 419-amino-acid chain: L-rhamnose isomerase (419 aa).

3 residues coordinate Mn(2+): His-262, Asp-294, and Asp-296.

The protein belongs to the rhamnose isomerase family. Homotetramer. Mn(2+) serves as cofactor.

It is found in the cytoplasm. The catalysed reaction is L-rhamnopyranose = L-rhamnulose. It functions in the pathway carbohydrate degradation; L-rhamnose degradation; glycerone phosphate from L-rhamnose: step 1/3. Functionally, catalyzes the interconversion of L-rhamnose and L-rhamnulose. This chain is L-rhamnose isomerase, found in Escherichia coli O7:K1 (strain IAI39 / ExPEC).